We begin with the raw amino-acid sequence, 1392 residues long: DNA-directed RNA polymerase subunit beta'' (1392 aa).

Cys224, Cys295, Cys302, and Cys305 together coordinate Zn(2+).

Belongs to the RNA polymerase beta' chain family. RpoC2 subfamily. In plastids the minimal PEP RNA polymerase catalytic core is composed of four subunits: alpha, beta, beta', and beta''. When a (nuclear-encoded) sigma factor is associated with the core the holoenzyme is formed, which can initiate transcription. Zn(2+) serves as cofactor.

The protein localises to the plastid. It is found in the chloroplast. The enzyme catalyses RNA(n) + a ribonucleoside 5'-triphosphate = RNA(n+1) + diphosphate. DNA-dependent RNA polymerase catalyzes the transcription of DNA into RNA using the four ribonucleoside triphosphates as substrates. The sequence is that of DNA-directed RNA polymerase subunit beta'' from Solanum tuberosum (Potato).